A 148-amino-acid polypeptide reads, in one-letter code: FAD synthase (148 aa).

Residues 9–10, 14–17, Asn-92, and Tyr-119 contribute to the ATP site; these read TF and HPGH.

This sequence belongs to the archaeal FAD synthase family. As to quaternary structure, homodimer. It depends on a divalent metal cation as a cofactor.

The catalysed reaction is FMN + ATP + H(+) = FAD + diphosphate. Its pathway is cofactor biosynthesis; FAD biosynthesis; FAD from FMN: step 1/1. In terms of biological role, catalyzes the transfer of the AMP portion of ATP to flavin mononucleotide (FMN) to produce flavin adenine dinucleotide (FAD) coenzyme. The chain is FAD synthase from Methanolacinia petrolearia (strain DSM 11571 / OCM 486 / SEBR 4847) (Methanoplanus petrolearius).